The chain runs to 204 residues: Factor arrest protein 3 (204 aa).

As to quaternary structure, component of a complex at least composed of FAR3, FAR7, FAR8, FAR10, FAR11 and VPS64.

It localises to the endoplasmic reticulum. Its function is as follows. Participates in the control of the reentry into the cell cycle following pheromone treatment. This is Factor arrest protein 3 (FAR3) from Saccharomyces cerevisiae (strain ATCC 204508 / S288c) (Baker's yeast).